The primary structure comprises 924 residues: Isoleucine--tRNA ligase (924 aa).

The short motif at 57–67 is the 'HIGH' region element; sequence PYANGDIHMGH. Position 552 (Glu-552) interacts with L-isoleucyl-5'-AMP. Residues 593–597 carry the 'KMSKS' region motif; sequence KMSKS. ATP is bound at residue Lys-596. Zn(2+) is bound by residues Cys-891, Cys-894, Cys-911, and Cys-914.

This sequence belongs to the class-I aminoacyl-tRNA synthetase family. IleS type 1 subfamily. Monomer. Zn(2+) serves as cofactor.

It is found in the cytoplasm. The enzyme catalyses tRNA(Ile) + L-isoleucine + ATP = L-isoleucyl-tRNA(Ile) + AMP + diphosphate. In terms of biological role, catalyzes the attachment of isoleucine to tRNA(Ile). As IleRS can inadvertently accommodate and process structurally similar amino acids such as valine, to avoid such errors it has two additional distinct tRNA(Ile)-dependent editing activities. One activity is designated as 'pretransfer' editing and involves the hydrolysis of activated Val-AMP. The other activity is designated 'posttransfer' editing and involves deacylation of mischarged Val-tRNA(Ile). The protein is Isoleucine--tRNA ligase of Geobacillus kaustophilus (strain HTA426).